The sequence spans 955 residues: Aminopeptidase A (955 aa).

Topologically, residues 1-17 (MDIEDKSSKMHCMKGKH) are cytoplasmic. The helical; Signal-anchor for type II membrane protein transmembrane segment at 18 to 38 (VAIICGVVIAVGLILGLGLGL) threads the bilayer. At 39-955 (GLKPEACNPP…LENSEQPNFV (917 aa)) the chain is on the extracellular side. A disordered region spans residues 49-69 (EDNGLLSTKPPTTSTPNVTNP). The segment covering 55 to 69 (STKPPTTSTPNVTNP) has biased composition (low complexity). N-linked (GlcNAc...) asparagine glycosylation is found at Asn-65, Asn-118, and Asn-192. Substrate is bound at residue Glu-218. 3 N-linked (GlcNAc...) asparagine glycosylation sites follow: Asn-312, Asn-319, and Asn-335. Residue 352–356 (GAMEN) participates in substrate binding. His-388 serves as a coordination point for Zn(2+). Glu-389 acts as the Proton acceptor in catalysis. Zn(2+) is bound by residues His-392 and Glu-411. Residues Asn-458, Asn-547, Asn-584, Asn-592, Asn-647, Asn-674, Asn-681, Asn-759, Asn-766, Asn-823, and Asn-836 are each glycosylated (N-linked (GlcNAc...) asparagine). A substrate-binding site is contributed by Arg-882.

It belongs to the peptidase M1 family. Homodimer; disulfide-linked. Zn(2+) is required as a cofactor.

The protein resides in the cell membrane. It carries out the reaction Release of N-terminal glutamate (and to a lesser extent aspartate) from a peptide.. With respect to regulation, the partially purified protein is inhibited by the aminopeptidase competitive inhibitors amastatin (Leu and acidic inhibitor), and bestatin (Leu inhibitor), by chelating agents EDTA, and 1,10-Phenanthroline, as well as by Zn(2+) ions. Substrate specificity is modulated by Ca(2+), Ba(2+), and Mn(2+) ions which enhances the enzymatic activity for cleavage of acidic residues. In terms of biological role, venom protein that cleaves N-terminal acidic residues from peptides with high potency in presence of calcium. It may have several roles in venom including alteration of blood pressure by cleaving circulating angiotensin-2, general degradation of host tissue, increase of permeability to other venom components, and/or processing of other toxins in the venom. This chain is Aminopeptidase A, found in Gloydius brevicauda (Korean slamosa snake).